Reading from the N-terminus, the 442-residue chain is tRNA modification GTPase MnmE (442 aa).

Arg-22, Glu-79, and Lys-118 together coordinate (6S)-5-formyl-5,6,7,8-tetrahydrofolate. One can recognise a TrmE-type G domain in the interval 215–365 (EIPIAIVGRP…LEKAILFEYQ (151 aa)). Residue Asn-225 participates in K(+) binding. GTP is bound by residues 225 to 230 (NVGKSS), 244 to 250 (TNIEGTT), and 269 to 272 (DTAG). Ser-229 lines the Mg(2+) pocket. Residues Thr-244, Ile-246, and Thr-249 each coordinate K(+). Thr-250 lines the Mg(2+) pocket. Lys-442 provides a ligand contact to (6S)-5-formyl-5,6,7,8-tetrahydrofolate.

Belongs to the TRAFAC class TrmE-Era-EngA-EngB-Septin-like GTPase superfamily. TrmE GTPase family. Homodimer. Heterotetramer of two MnmE and two MnmG subunits. The cofactor is K(+).

The protein localises to the cytoplasm. Exhibits a very high intrinsic GTPase hydrolysis rate. Involved in the addition of a carboxymethylaminomethyl (cmnm) group at the wobble position (U34) of certain tRNAs, forming tRNA-cmnm(5)s(2)U34. This chain is tRNA modification GTPase MnmE, found in Mycoplasmopsis pulmonis (strain UAB CTIP) (Mycoplasma pulmonis).